A 333-amino-acid polypeptide reads, in one-letter code: Fructose-1,6-bisphosphatase class 1 (333 aa).

The Mg(2+) site is built by E92, D113, L115, and D116. Substrate contacts are provided by residues 116 to 119 (DGSS), N209, Y242, and K272. E278 provides a ligand contact to Mg(2+).

It belongs to the FBPase class 1 family. As to quaternary structure, homotetramer. The cofactor is Mg(2+).

Its subcellular location is the cytoplasm. The enzyme catalyses beta-D-fructose 1,6-bisphosphate + H2O = beta-D-fructose 6-phosphate + phosphate. It functions in the pathway carbohydrate biosynthesis; Calvin cycle. The protein is Fructose-1,6-bisphosphatase class 1 of Chlorobaculum tepidum (strain ATCC 49652 / DSM 12025 / NBRC 103806 / TLS) (Chlorobium tepidum).